We begin with the raw amino-acid sequence, 245 residues long: tRNA (guanine-N(1)-)-methyltransferase (245 aa).

Residues glycine 111 and isoleucine 131–leucine 136 contribute to the S-adenosyl-L-methionine site.

It belongs to the RNA methyltransferase TrmD family. Homodimer.

It localises to the cytoplasm. The enzyme catalyses guanosine(37) in tRNA + S-adenosyl-L-methionine = N(1)-methylguanosine(37) in tRNA + S-adenosyl-L-homocysteine + H(+). Specifically methylates guanosine-37 in various tRNAs. The sequence is that of tRNA (guanine-N(1)-)-methyltransferase from Staphylococcus carnosus (strain TM300).